A 294-amino-acid polypeptide reads, in one-letter code: Small ribosomal subunit protein uS2 (294 aa).

Over residues 232–245 the composition is skewed to basic and acidic residues; it reads RAAEQDKAADDKAQ. Positions 232–294 are disordered; the sequence is RAAEQDKAAD…GSEEDGEAAN (63 aa). Low complexity predominate over residues 246 to 265; the sequence is EQAAAEAAKPEPAAPAPAAE.

It belongs to the universal ribosomal protein uS2 family.

In Desulfatibacillum aliphaticivorans, this protein is Small ribosomal subunit protein uS2.